The chain runs to 355 residues: tRNA-specific 2-thiouridylase MnmA (355 aa).

Residues 6–13 (LLSGGVDS) and L33 each bind ATP. Catalysis depends on C100, which acts as the Nucleophile. A disulfide bond links C100 and C195. Residue G123 participates in ATP binding. The tract at residues 145–147 (KDQ) is interaction with tRNA. Catalysis depends on C195, which acts as the Cysteine persulfide intermediate.

The protein belongs to the MnmA/TRMU family.

The protein localises to the cytoplasm. It carries out the reaction S-sulfanyl-L-cysteinyl-[protein] + uridine(34) in tRNA + AH2 + ATP = 2-thiouridine(34) in tRNA + L-cysteinyl-[protein] + A + AMP + diphosphate + H(+). Its function is as follows. Catalyzes the 2-thiolation of uridine at the wobble position (U34) of tRNA, leading to the formation of s(2)U34. In Borreliella burgdorferi (strain ATCC 35210 / DSM 4680 / CIP 102532 / B31) (Borrelia burgdorferi), this protein is tRNA-specific 2-thiouridylase MnmA.